The following is a 129-amino-acid chain: Small ribosomal subunit protein uS11 (129 aa).

This sequence belongs to the universal ribosomal protein uS11 family. As to quaternary structure, part of the 30S ribosomal subunit. Interacts with proteins S7 and S18. Binds to IF-3.

In terms of biological role, located on the platform of the 30S subunit, it bridges several disparate RNA helices of the 16S rRNA. Forms part of the Shine-Dalgarno cleft in the 70S ribosome. The polypeptide is Small ribosomal subunit protein uS11 (Vibrio atlanticus (strain LGP32) (Vibrio splendidus (strain Mel32))).